The chain runs to 449 residues: Capsid protein (449 aa).

The tract at residues 1-43 is DNA-binding; the sequence is MERRARRPRGRFYAFRRGRWNHLKRLRRRYKFRHRRRQRYRRR. Residues 6–47 form a nuclear localization signals region; that stretch reads RRPRGRFYAFRRGRWNHLKRLRRRYKFRHRRRQRYRRRAFRK.

This sequence belongs to the gyrovirus capsid protein family. As to quaternary structure, homomultimer (Potential). Interacts with Rep; this interaction relocates Rep into the nucleus.

The protein resides in the host nucleus. It is found in the virion. In terms of biological role, self-assembles to form the virion icosahedral capsid with a T=1 symmetry. This very small capsid (25 nm in diameter) allows the virus to be very stable in the environment and resistant to some disinfectants, including detergents. Essential for the initial attachment to host receptors. After attachment, the virus is endocytosed and traffics to the nucleus. The capsid protein binds and transports the viral genome and Rep across the nuclear envelope. The protein is Capsid protein (VP1) of Chicken anemia virus (isolate Japan 82-2) (CAV).